We begin with the raw amino-acid sequence, 523 residues long: NAD(P) transhydrogenase subunit alpha (523 aa).

Over 1-411 (MKIGAPREIF…AEIATFRKQT (411 aa)) the chain is Cytoplasmic. Residues 127–130 (QKMD), Val177, 197–199 (DVR), and Gly229 contribute to the NAD(+) site. The next 2 membrane-spanning stretches (helical) occupy residues 412–432 (VSQVAMLAVGTALLLFVGMYA) and 433–455 (PPSFMAHFIVFALACFVGFQVIW). Over 456 to 464 (NVSHSLHTP) the chain is Cytoplasmic. A helical membrane pass occupies residues 465–485 (LMAVTNAISGIVILGALLQIG). At 486 to 489 (SGNV) the chain is on the periplasmic side. The chain crosses the membrane as a helical span at residues 490 to 510 (LVVLLAAISVLIATINIVGGF). At 511–523 (LVTRRMLAMFQKS) the chain is on the cytoplasmic side.

Belongs to the AlaDH/PNT family. As to quaternary structure, heterodimer of an alpha (PntA) and a beta (PntB) chain.

It is found in the cell inner membrane. The enzyme catalyses NAD(+) + NADPH + H(+)(in) = NADH + NADP(+) + H(+)(out). In terms of biological role, the transhydrogenation between NADH and NADP is coupled to respiration and ATP hydrolysis and functions as a proton pump across the membrane. The protein is NAD(P) transhydrogenase subunit alpha of Cereibacter sphaeroides (Rhodobacter sphaeroides).